Here is a 369-residue protein sequence, read N- to C-terminus: ATP-dependent (S)-NAD(P)H-hydrate dehydratase (369 aa).

Positions 14–356 (LFQKARKLVP…DEVHESFLTL (343 aa)) constitute a YjeF C-terminal domain. (6S)-NADPHX is bound by residues Gly126 and 179-185 (NVNEFSR). Residues 231 to 235 (KGPHD) and 250 to 259 (GGLKRSGGQG) contribute to the ATP site. Residue Asp260 coordinates (6S)-NADPHX. Basic and acidic residues predominate over residues 284-306 (GEQEHSKEAENKEEVQGELESNK). The interval 284-307 (GEQEHSKEAENKEEVQGELESNKR) is disordered.

Belongs to the NnrD/CARKD family. Mg(2+) serves as cofactor.

The protein resides in the cytoplasm. The catalysed reaction is (6S)-NADHX + ATP = ADP + phosphate + NADH + H(+). The enzyme catalyses (6S)-NADPHX + ATP = ADP + phosphate + NADPH + H(+). Functionally, catalyzes the dehydration of the S-form of NAD(P)HX at the expense of ATP, which is converted to ADP. Together with NAD(P)HX epimerase, which catalyzes the epimerization of the S- and R-forms, the enzyme allows the repair of both epimers of NAD(P)HX, a damaged form of NAD(P)H that is a result of enzymatic or heat-dependent hydration. This is ATP-dependent (S)-NAD(P)H-hydrate dehydratase from Emericella nidulans (strain FGSC A4 / ATCC 38163 / CBS 112.46 / NRRL 194 / M139) (Aspergillus nidulans).